A 684-amino-acid polypeptide reads, in one-letter code: Protein SEEDLING PLASTID DEVELOPMENT 1 (684 aa).

The N-terminal 78 residues, 1–78 (MRALNSRLVL…FSFDVRSPSS (78 aa)), are a transit peptide targeting the chloroplast. Residues 33-91 (SDSSSSFRRTRGARQRIASSKSPASSPSPVRRPSDGFSFDVRSPSSDSSISSRKSPTTA) form a disordered region. The segment covering 50 to 88 (ASSKSPASSPSPVRRPSDGFSFDVRSPSSDSSISSRKSP) has biased composition (low complexity). Residue 220–227 (GSPGVGKT) coordinates ATP. Positions 651-684 (PRRSTKKTLTSSSPQKSADGSMGTTGTRLPFLKD) are disordered. Low complexity predominate over residues 657 to 667 (KTLTSSSPQKS).

It belongs to the ycf45 family.

It localises to the plastid. The protein resides in the chloroplast membrane. It is found in the chloroplast envelope. Required during eoplast (a highly reduced plastid type present during the degreening and dehydration stages of seed maturation) development in embryos and early stages of eoplast redifferentiation during seedling growth. This is Protein SEEDLING PLASTID DEVELOPMENT 1 from Arabidopsis thaliana (Mouse-ear cress).